We begin with the raw amino-acid sequence, 108 residues long: uncharacterized protein (108 aa).

This is an uncharacterized protein from Treponema pallidum (strain Nichols).